The primary structure comprises 345 residues: 4-hydroxyproline 2-epimerase (345 aa).

Residue Gln85 coordinates substrate. Residue Ser93 is the Proton acceptor of the active site. Residues 94–95 (GS) and Asp251 contribute to the substrate site. Residue Cys255 is the Proton donor of the active site. A substrate-binding site is contributed by 256–257 (GT).

This sequence belongs to the proline racemase family.

The enzyme catalyses trans-4-hydroxy-L-proline = cis-4-hydroxy-D-proline. Its function is as follows. Catalyzes the epimerization of trans-4-hydroxy-L-proline (t4LHyp) to cis-4-hydroxy-D-proline (c4DHyp). May be involved in a degradation pathway of t4LHyp, which would allow A.tumefaciens to grow on t4LHyp as a sole carbon source. Can also catalyze the epimerization of trans-3-hydroxy-L-proline (t3LHyp) to cis-3-hydroxy-D-proline (c3DHyp) in vitro. Displays no proline racemase activity. The protein is 4-hydroxyproline 2-epimerase of Agrobacterium fabrum (strain C58 / ATCC 33970) (Agrobacterium tumefaciens (strain C58)).